The primary structure comprises 312 residues: HTH-type transcriptional regulator MetR (312 aa).

Residues 1–59 (MIEIKHLRTLQALKNNGSLSAAAIQLHQTQSAISHQFNELEKKLGFKLFIRKSNPIKFT) form the HTH lysR-type domain. Positions 19-38 (LSAAAIQLHQTQSAISHQFN) form a DNA-binding region, H-T-H motif.

This sequence belongs to the LysR transcriptional regulatory family.

The protein resides in the cytoplasm. In terms of biological role, control of the last step in methionine biosynthesis; MetR is a positive activator of the metA, metE and metH genes. The polypeptide is HTH-type transcriptional regulator MetR (metR) (Buchnera aphidicola subsp. Schizaphis graminum (strain Sg)).